We begin with the raw amino-acid sequence, 349 residues long: 4-hydroxythreonine-4-phosphate dehydrogenase (349 aa).

Substrate-binding residues include histidine 141 and threonine 142. Residues histidine 176, histidine 221, and histidine 276 each coordinate a divalent metal cation. Substrate contacts are provided by lysine 284, asparagine 293, and arginine 302.

It belongs to the PdxA family. In terms of assembly, homodimer. Requires Zn(2+) as cofactor. Mg(2+) serves as cofactor. Co(2+) is required as a cofactor.

The protein resides in the cytoplasm. It catalyses the reaction 4-(phosphooxy)-L-threonine + NAD(+) = 3-amino-2-oxopropyl phosphate + CO2 + NADH. Its pathway is cofactor biosynthesis; pyridoxine 5'-phosphate biosynthesis; pyridoxine 5'-phosphate from D-erythrose 4-phosphate: step 4/5. Functionally, catalyzes the NAD(P)-dependent oxidation of 4-(phosphooxy)-L-threonine (HTP) into 2-amino-3-oxo-4-(phosphooxy)butyric acid which spontaneously decarboxylates to form 3-amino-2-oxopropyl phosphate (AHAP). The protein is 4-hydroxythreonine-4-phosphate dehydrogenase of Methylorubrum extorquens (strain CM4 / NCIMB 13688) (Methylobacterium extorquens).